The following is an 83-amino-acid chain: Alpha-conotoxin QcIA (83 aa).

The N-terminal stretch at 1–21 (MGMRMMFTLFLLAVLSTTVVS) is a signal peptide. Residues 22-48 (FTLDRASNGRDAAADSKAADQIAQTVR) constitute a propeptide that is removed on maturation. 2 disulfide bridges follow: Cys51–Cys57 and Cys52–Cys65. The tract at residues 53–55 (SNP) is ser-Xaa-Pro motif, crucial for potent interaction with nAChR. Positions 66–83 (RRTLMLQNPLNHDMSPSA) are excised as a propeptide.

This sequence belongs to the conotoxin A superfamily. Expressed by the venom duct.

The protein resides in the secreted. In terms of biological role, alpha-conotoxins bind to the nicotinic acetylcholine receptors (nAChR) and inhibit them. A synthetic amidated version of this toxin potently and preferentially antagonizes neuronal rat alpha-3-beta-2 (IC(50)=55.7 nM) and alpha-6/alpha-3-beta-4 (IC(50)=90.69 nM) nAChRs. In Conus quercinus (Oak cone), this protein is Alpha-conotoxin QcIA.